The primary structure comprises 346 residues: [LysW]-lysine/[LysW]-ornithine hydrolase (346 aa).

His68 provides a ligand contact to Zn(2+). Asp70 is an active-site residue. Asp92 provides a ligand contact to Zn(2+). The active-site Proton acceptor is Glu122. Zn(2+)-binding residues include Glu123, Glu146, and His317.

Belongs to the peptidase M20A family. LysK subfamily. Zn(2+) is required as a cofactor. Requires Co(2+) as cofactor.

The protein resides in the cytoplasm. It carries out the reaction [amino-group carrier protein]-C-terminal-gamma-(L-lysyl)-L-glutamate + H2O = [amino-group carrier protein]-C-terminal-L-glutamate + L-lysine. It catalyses the reaction [amino-group carrier protein]-C-terminal-gamma-(L-ornithyl)-L-glutamate + H2O = [amino-group carrier protein]-C-terminal-L-glutamate + L-ornithine. Its pathway is amino-acid biosynthesis; L-lysine biosynthesis via AAA pathway; L-lysine from L-alpha-aminoadipate (Thermus route): step 5/5. The protein operates within amino-acid biosynthesis; L-arginine biosynthesis. In terms of biological role, catalyzes the release of L-lysine from [LysW]-gamma-L-lysine and the release of L-ornithine from [LysW]-L-ornithine. The chain is [LysW]-lysine/[LysW]-ornithine hydrolase from Saccharolobus islandicus (strain Y.G.57.14 / Yellowstone #1) (Sulfolobus islandicus).